Here is a 199-residue protein sequence, read N- to C-terminus: Peptidyl-tRNA hydrolase (199 aa).

Residue Tyr-18 coordinates tRNA. The active-site Proton acceptor is His-23. Residues Tyr-72, Asn-74, and Asn-120 each contribute to the tRNA site.

This sequence belongs to the PTH family. Monomer.

The protein localises to the cytoplasm. It catalyses the reaction an N-acyl-L-alpha-aminoacyl-tRNA + H2O = an N-acyl-L-amino acid + a tRNA + H(+). Hydrolyzes ribosome-free peptidyl-tRNAs (with 1 or more amino acids incorporated), which drop off the ribosome during protein synthesis, or as a result of ribosome stalling. Its function is as follows. Catalyzes the release of premature peptidyl moieties from peptidyl-tRNA molecules trapped in stalled 50S ribosomal subunits, and thus maintains levels of free tRNAs and 50S ribosomes. The sequence is that of Peptidyl-tRNA hydrolase from Bifidobacterium longum (strain DJO10A).